The chain runs to 1230 residues: Serine/threonine-protein kinase CST20 (1230 aa).

The span at Met-1–Ser-20 shows a compositional bias: polar residues. Disordered stretches follow at residues Met-1 to Asn-384 and Ser-413 to Glu-470. Low complexity-rich tracts occupy residues Asn-57–Ser-70 and Ser-96–Ser-125. Residues His-150–Tyr-161 show a composition bias toward basic and acidic residues. Polar residues-rich tracts occupy residues Asp-175 to Ser-197, Thr-207 to Ala-224, and Pro-237 to Asp-246. The span at Ser-248–Val-257 shows a compositional bias: low complexity. Composition is skewed to polar residues over residues Ser-262–Ser-277 and Asp-311–Gly-330. Low complexity-rich tracts occupy residues Asn-349–Thr-381 and Lys-439–Ser-468. The region spanning Ile-475–Gly-488 is the CRIB domain. Disordered regions lie at residues Phe-545 to Asp-831 and Leu-867 to Ala-919. Residues Asn-550 to Asn-561 are compositionally biased toward polar residues. The segment covering Ser-570–Ala-581 has biased composition (gly residues). The span at Ile-604 to Lys-613 shows a compositional bias: polar residues. Basic and acidic residues predominate over residues Thr-614–Asn-628. Positions Ala-629–Gln-642 are enriched in polar residues. Low complexity-rich tracts occupy residues Pro-670–Asp-683, Ser-696–Leu-710, and Ser-736–Ser-749. Residues Gln-750–Ala-761 show a composition bias toward polar residues. Over residues Ala-789–Pro-807 the composition is skewed to pro residues. Residues Leu-811–Ser-826 show a composition bias toward polar residues. Residues Leu-867–Arg-876 are compositionally biased toward basic and acidic residues. The segment covering Gln-877–Ser-892 has biased composition (polar residues). The region spanning Tyr-953–Ile-1205 is the Protein kinase domain. Residues Ile-959 to Val-967 and Lys-983 contribute to the ATP site. The active-site Proton acceptor is Asp-1073.

It belongs to the protein kinase superfamily. STE Ser/Thr protein kinase family. STE20 subfamily.

Its subcellular location is the cytoplasm. The protein resides in the nucleus. The catalysed reaction is L-seryl-[protein] + ATP = O-phospho-L-seryl-[protein] + ADP + H(+). It catalyses the reaction L-threonyl-[protein] + ATP = O-phospho-L-threonyl-[protein] + ADP + H(+). Its function is as follows. MAP4K component of the MAPK pathway required for the mating pheromone response, and the regulation of cell polarity and cell cycle. Phosphorylates histone H2B to form H2BS10ph. Required for hyphal formation and virulence. The protein is Serine/threonine-protein kinase CST20 (CST20) of Candida albicans (Yeast).